The chain runs to 55 residues: Serine protease inhibitor Kazal-type 1 (55 aa).

Residues 2 to 55 (QGRDANCNYEFPGCPRNLEPVCGTDGNTYNNECLLCMENKKRDVPIRIQKDGPC) enclose the Kazal-like domain. Intrachain disulfides connect C8/C37, C15/C34, and C23/C55.

The protein localises to the secreted. Serine protease inhibitor which exhibits anti-trypsin activity. In the pancreas, protects against trypsin-catalyzed premature activation of zymogens. Functionally, in the male reproductive tract, binds to sperm heads where it modulates sperm capacitance by inhibiting calcium uptake and nitrogen oxide (NO) production. This is Serine protease inhibitor Kazal-type 1 (SPINK1) from Monodelphis domestica (Gray short-tailed opossum).